The chain runs to 312 residues: Tetraacyldisaccharide 4'-kinase (312 aa).

60 to 67 is a binding site for ATP; sequence IAGGSGKT.

This sequence belongs to the LpxK family.

It catalyses the reaction a lipid A disaccharide + ATP = a lipid IVA + ADP + H(+). It participates in glycolipid biosynthesis; lipid IV(A) biosynthesis; lipid IV(A) from (3R)-3-hydroxytetradecanoyl-[acyl-carrier-protein] and UDP-N-acetyl-alpha-D-glucosamine: step 6/6. In terms of biological role, transfers the gamma-phosphate of ATP to the 4'-position of a tetraacyldisaccharide 1-phosphate intermediate (termed DS-1-P) to form tetraacyldisaccharide 1,4'-bis-phosphate (lipid IVA). This Helicobacter pylori (strain J99 / ATCC 700824) (Campylobacter pylori J99) protein is Tetraacyldisaccharide 4'-kinase.